The chain runs to 434 residues: Nicotinate phosphoribosyltransferase (434 aa).

His-242 carries the post-translational modification Phosphohistidine; by autocatalysis.

The protein belongs to the NAPRTase family. In terms of processing, transiently phosphorylated on a His residue during the reaction cycle. Phosphorylation strongly increases the affinity for substrates and increases the rate of nicotinate D-ribonucleotide production. Dephosphorylation regenerates the low-affinity form of the enzyme, leading to product release.

It catalyses the reaction nicotinate + 5-phospho-alpha-D-ribose 1-diphosphate + ATP + H2O = nicotinate beta-D-ribonucleotide + ADP + phosphate + diphosphate. The protein operates within cofactor biosynthesis; NAD(+) biosynthesis; nicotinate D-ribonucleotide from nicotinate: step 1/1. In terms of biological role, catalyzes the synthesis of beta-nicotinate D-ribonucleotide from nicotinate and 5-phospho-D-ribose 1-phosphate at the expense of ATP. The sequence is that of Nicotinate phosphoribosyltransferase from Agrobacterium fabrum (strain C58 / ATCC 33970) (Agrobacterium tumefaciens (strain C58)).